Reading from the N-terminus, the 153-residue chain is uncharacterized protein (153 aa).

The protein localises to the mitochondrion. This is an uncharacterized protein from Arabidopsis thaliana (Mouse-ear cress).